A 185-amino-acid polypeptide reads, in one-letter code: Hypoxanthine/guanine phosphoribosyltransferase (185 aa).

The protein belongs to the purine/pyrimidine phosphoribosyltransferase family. Archaeal HPRT subfamily. In terms of assembly, homodimer.

The protein localises to the cytoplasm. It catalyses the reaction IMP + diphosphate = hypoxanthine + 5-phospho-alpha-D-ribose 1-diphosphate. The enzyme catalyses GMP + diphosphate = guanine + 5-phospho-alpha-D-ribose 1-diphosphate. It functions in the pathway purine metabolism; IMP biosynthesis via salvage pathway; IMP from hypoxanthine: step 1/1. Functionally, catalyzes a salvage reaction resulting in the formation of IMP that is energically less costly than de novo synthesis. This chain is Hypoxanthine/guanine phosphoribosyltransferase, found in Methanococcus maripaludis (strain C6 / ATCC BAA-1332).